Here is a 307-residue protein sequence, read N- to C-terminus: Cyclin-dependent kinase 5 activator 1 (307 aa).

Gly2 carries N-myristoyl glycine lipidation. Position 8 is a phosphoserine; by CDK5 (Ser8). Positions 97-136 (TFAQPPPAQPPAPPASQLSGSQTGGSSSVKKAPHPAVTSA) are disordered. Positions 100–110 (QPPPAQPPAPP) are enriched in pro residues. Low complexity predominate over residues 111–124 (ASQLSGSQTGGSSS). A Phosphothreonine; by CDK5 modification is found at Thr138.

This sequence belongs to the cyclin-dependent kinase 5 activator family. As to quaternary structure, heterodimer composed of a catalytic subunit CDK5 and a regulatory subunit CDK5R1 (p25) and macromolecular complex composed of at least CDK5, CDK5R1 (p35) and CDK5RAP1 or CDK5RAP2 or CDK5RAP3. Only the heterodimer shows kinase activity. Interacts with EPHA4 and NGEF; may mediate the activation of NGEF by EPHA4. Interacts with RASGRF2. The complex p35/CDK5 interacts with CLOCK. The p35 form is proteolytically cleaved by calpain, giving rise to the p25 form. P35 has a 5 to 10 fold shorter half-life compared to p25. The conversion results in deregulation of the CDK5 kinase: p25/CDK5 kinase displays an increased and altered tau phosphorylation in comparison to the p35/CDK5 kinase in vivo. Post-translationally, myristoylated. A proper myristoylation signal is essential for the proper distribution of p35. In terms of processing, ubiquitinated, leading to its degradation: degradation of p35 by proteasome results in down-regulation of CDK5 activity. During this process, CDK5 phosphorylates p35 and induces its ubiquitination and subsequent degradation. Ubiquitinated by the CRL2(FEM1B) complex, which recognizes the -Gly-Leu-Asp-Arg C-degron at the C-terminus, leading to its degradation. Phosphorylation at Ser-8 and Thr-138 by CDK5 prevents calpain-mediated proteolysis. Brain and neuron specific.

The protein resides in the cell membrane. It is found in the cell projection. It localises to the neuron projection. The protein localises to the nucleus. Its subcellular location is the cytoplasm. The protein resides in the perinuclear region. It is found in the perikaryon. P35 is a neuron specific activator of CDK5. The complex p35/CDK5 is required for neurite outgrowth and cortical lamination. Involved in dendritic spine morphogenesis by mediating the EFNA1-EPHA4 signaling. Activator of TPKII. The complex p35/CDK5 participates in the regulation of the circadian clock by modulating the function of CLOCK protein: phosphorylates CLOCK at 'Thr-451' and 'Thr-461' and regulates the transcriptional activity of the CLOCK-BMAL1 heterodimer in association with altered stability and subcellular distribution. The sequence is that of Cyclin-dependent kinase 5 activator 1 (CDK5R1) from Homo sapiens (Human).